A 429-amino-acid polypeptide reads, in one-letter code: Sex determination protein fox-1 (429 aa).

Residues 156–180 (ATTAGSTNGSAAVTQPDPSTSSGPD) are compositionally biased toward low complexity. A disordered region spans residues 156 to 188 (ATTAGSTNGSAAVTQPDPSTSSGPDGPKRLHVS). In terms of domain architecture, RRM spans 183 to 259 (KRLHVSNIPF…RKIEVNCATA (77 aa)).

As to quaternary structure, interacts with sup-12. In males and hermaphrodites expressed in a subset of cells in the head and tail. Expressed in the pharynx, intestine and in muscles from the vulva and body wall.

The protein localises to the nucleus. RNA-binding protein that regulates tissue-specific alternative splicing events by binding to 5'-UGCAUG-3' and 5'-GCACG-3' elements. Also binds to poly(A), poly(G), poly(C), or poly(U) stretches of RNA. Plays a role in the sex determination pathway and X chromosome dosage compensation, and together with sex-1 is involved in making the distinction between one and two X-chromosomes. Binds to 5'-GCAUG-3' and 5'-GCACG-3' elements in intron 6 of the pre-mRNA of the sex-determining factor xol-1 to promote its alternative splicing and together with sex-1 negatively regulates the expression of xol-1 to promote hermaphrodite development. Negatively regulates the expression of the active isoform of xol-1 (isoform b) by promoting intron 6 retention and the deletion of exon 7 coding sequences in hermaphrodite embryos. Furthermore, binding to the pre-mRNA of xol-1 can also direct the use of an alternative 3' splice site enabling the xol-1 transcript to be trans-spliced to unrelated genes on chromosome 2, which also leads to xol-1 exon 7 deletion. Does not seem to regulate the retention of introns 1 to 5 of xol-1 pre-mRNA. Plays a role in the association of the dosage compensation complex proteins dpy-27 and sdc-3 with the hermaphrodite X chromosomes. Binds to 5'-UGCAUG-3' elements in intron 7 of the pre-mRNA of unc-32 to promote its alternative splicing in neuronal tissues. Binds to 5'-UGCAUG-3' elements in intron 4 of the pre-mRNA of egl-15 to promote its alternative splicing in body wall muscle tissues. Promotes binding of RNA-binding protein sup-12 to target RNA. Plays a role in male mating behavior. The protein is Sex determination protein fox-1 of Caenorhabditis elegans.